A 250-amino-acid chain; its full sequence is 2,3-bisphosphoglycerate-dependent phosphoglycerate mutase (250 aa).

Residues 10–17, 23–24, arginine 62, 89–92, lysine 100, 116–117, and 185–186 contribute to the substrate site; these read RHGESQWN, TG, ERHY, RR, and GN. The Tele-phosphohistidine intermediate role is filled by histidine 11. The active-site Proton donor/acceptor is the glutamate 89.

Belongs to the phosphoglycerate mutase family. BPG-dependent PGAM subfamily. In terms of assembly, homodimer.

It carries out the reaction (2R)-2-phosphoglycerate = (2R)-3-phosphoglycerate. The protein operates within carbohydrate degradation; glycolysis; pyruvate from D-glyceraldehyde 3-phosphate: step 3/5. Functionally, catalyzes the interconversion of 2-phosphoglycerate and 3-phosphoglycerate. This chain is 2,3-bisphosphoglycerate-dependent phosphoglycerate mutase, found in Salmonella choleraesuis (strain SC-B67).